The following is a 163-amino-acid chain: Steroid receptor-associated and regulated protein (163 aa).

Residues 1-16 are compositionally biased toward basic and acidic residues; sequence MAFSKDPRRTSLRDSS. 2 disordered regions span residues 1-30 and 96-149; these read MAFS…CAPK and ALDG…EKVK. Positions 17–26 are enriched in polar residues; the sequence is VEMSSGTQPS.

In terms of assembly, interacts with 14-3-3 proteins.

In terms of biological role, may regulate the transcriptional function of androgen and estrogen receptors. The sequence is that of Steroid receptor-associated and regulated protein from Mus musculus (Mouse).